The primary structure comprises 145 residues: Cytochrome b (145 aa).

The chain crosses the membrane as a helical span at residues 38 to 58; the sequence is FFALHFLLPFVLAALALMHLI. Residues histidine 42 and histidine 56 each coordinate heme b. Histidine 61 contributes to the a ubiquinone binding site. A helical membrane pass occupies residues 85-105; that stretch reads FIFKDLVTIFIFFIVLSIFVF.

Belongs to the cytochrome b family. In terms of assembly, fungal cytochrome b-c1 complex contains 10 subunits; 3 respiratory subunits, 2 core proteins and 5 low-molecular weight proteins. Cytochrome b-c1 complex is a homodimer. Requires heme b as cofactor.

It is found in the mitochondrion inner membrane. Component of the ubiquinol-cytochrome c reductase complex (complex III or cytochrome b-c1 complex) that is part of the mitochondrial respiratory chain. The b-c1 complex mediates electron transfer from ubiquinol to cytochrome c. Contributes to the generation of a proton gradient across the mitochondrial membrane that is then used for ATP synthesis. The sequence is that of Cytochrome b (cob) from Aspergillus flavus.